Here is a 486-residue protein sequence, read N- to C-terminus: Cardiolipin synthase A (486 aa).

Helical transmembrane passes span 3 to 23 (TFYT…IAGV) and 38 to 58 (MAWL…YLSV). 2 PLD phosphodiesterase domains span residues 219–246 (MDLR…VDPR) and 399–426 (EGGL…DMRS). Residues His224, Lys226, Asp231, His404, Lys406, and Asp411 contribute to the active site.

This sequence belongs to the phospholipase D family. Cardiolipin synthase subfamily. ClsA sub-subfamily.

The protein localises to the cell inner membrane. The enzyme catalyses 2 a 1,2-diacyl-sn-glycero-3-phospho-(1'-sn-glycerol) = a cardiolipin + glycerol. In terms of biological role, catalyzes the reversible phosphatidyl group transfer from one phosphatidylglycerol molecule to another to form cardiolipin (CL) (diphosphatidylglycerol) and glycerol. The polypeptide is Cardiolipin synthase A (Salmonella gallinarum (strain 287/91 / NCTC 13346)).